A 297-amino-acid polypeptide reads, in one-letter code: MATH domain and coiled-coil domain-containing protein At2g05420 (297 aa).

In terms of domain architecture, MATH spans serine 7–valine 139. The stretch at lysine 239–lysine 281 forms a coiled coil.

This Arabidopsis thaliana (Mouse-ear cress) protein is MATH domain and coiled-coil domain-containing protein At2g05420.